The following is a 172-amino-acid chain: 3-hydroxydecanoyl-[acyl-carrier-protein] dehydratase (172 aa).

His71 is a catalytic residue.

The protein belongs to the thioester dehydratase family. FabA subfamily. As to quaternary structure, homodimer.

Its subcellular location is the cytoplasm. It catalyses the reaction a (3R)-hydroxyacyl-[ACP] = a (2E)-enoyl-[ACP] + H2O. It carries out the reaction (3R)-hydroxydecanoyl-[ACP] = (2E)-decenoyl-[ACP] + H2O. The catalysed reaction is (2E)-decenoyl-[ACP] = (3Z)-decenoyl-[ACP]. It participates in lipid metabolism; fatty acid biosynthesis. Necessary for the introduction of cis unsaturation into fatty acids. Catalyzes the dehydration of (3R)-3-hydroxydecanoyl-ACP to E-(2)-decenoyl-ACP and then its isomerization to Z-(3)-decenoyl-ACP. Can catalyze the dehydratase reaction for beta-hydroxyacyl-ACPs with saturated chain lengths up to 16:0, being most active on intermediate chain length. The polypeptide is 3-hydroxydecanoyl-[acyl-carrier-protein] dehydratase (Aliivibrio fischeri (strain ATCC 700601 / ES114) (Vibrio fischeri)).